A 110-amino-acid chain; its full sequence is Hydrogenase maturation factor HypA (110 aa).

Ni(2+) is bound at residue His2. Cys70, Cys73, Cys86, and Cys89 together coordinate Zn(2+).

The protein belongs to the HypA/HybF family.

Its function is as follows. Involved in the maturation of [NiFe] hydrogenases. Required for nickel insertion into the metal center of the hydrogenase. The chain is Hydrogenase maturation factor HypA from Geotalea daltonii (strain DSM 22248 / JCM 15807 / FRC-32) (Geobacter daltonii).